We begin with the raw amino-acid sequence, 435 residues long: tRNA modification GTPase MnmE (435 aa).

(6S)-5-formyl-5,6,7,8-tetrahydrofolate contacts are provided by arginine 24, glutamate 85, and arginine 124. One can recognise a TrmE-type G domain in the interval 220–361 (GLVFTIVGAP…LRTALAERAR (142 aa)). A K(+)-binding site is contributed by asparagine 230. GTP contacts are provided by residues 230–235 (NVGKSS), 249–255 (SAIAGTT), and 274–277 (DTAG). Serine 234 contacts Mg(2+). K(+)-binding residues include serine 249, isoleucine 251, and threonine 254. Mg(2+) is bound at residue threonine 255. Lysine 435 contacts (6S)-5-formyl-5,6,7,8-tetrahydrofolate.

It belongs to the TRAFAC class TrmE-Era-EngA-EngB-Septin-like GTPase superfamily. TrmE GTPase family. In terms of assembly, homodimer. Heterotetramer of two MnmE and two MnmG subunits. It depends on K(+) as a cofactor.

The protein localises to the cytoplasm. Exhibits a very high intrinsic GTPase hydrolysis rate. Involved in the addition of a carboxymethylaminomethyl (cmnm) group at the wobble position (U34) of certain tRNAs, forming tRNA-cmnm(5)s(2)U34. The polypeptide is tRNA modification GTPase MnmE (Gluconacetobacter diazotrophicus (strain ATCC 49037 / DSM 5601 / CCUG 37298 / CIP 103539 / LMG 7603 / PAl5)).